A 159-amino-acid polypeptide reads, in one-letter code: Probable epoxidase scpX (159 aa).

Residues 1-25 form the signal peptide; sequence MATLIRLLRLLPVASSSAVLMFALD. Helical transmembrane passes span 59 to 79 and 96 to 116; these read WVLI…LFIS and LLFS…IAAI. N-linked (GlcNAc...) asparagine glycosylation is found at asparagine 124 and asparagine 136. A helical membrane pass occupies residues 139 to 159; it reads RALLTDLPAWLCFIAAALKAL.

This sequence belongs to the epoxidase xenD family.

It is found in the membrane. It functions in the pathway mycotoxin biosynthesis. In terms of biological role, probable epoxidase; part of the gene scp cluster that mediates the biosynthesis of a hirsutellone-like compound that has still to be identified. The sequence is that of Probable epoxidase scpX from Mollisia scopiformis (Conifer needle endophyte fungus).